The following is a 407-amino-acid chain: Imidazolonepropionase (407 aa).

Histidine 68 and histidine 70 together coordinate Fe(3+). The Zn(2+) site is built by histidine 68 and histidine 70. Positions 77, 140, and 173 each coordinate 4-imidazolone-5-propanoate. Tyrosine 140 is a binding site for N-formimidoyl-L-glutamate. Histidine 238 contacts Fe(3+). Histidine 238 lines the Zn(2+) pocket. Glutamine 241 is a binding site for 4-imidazolone-5-propanoate. Fe(3+) is bound at residue aspartate 313. Aspartate 313 is a binding site for Zn(2+). N-formimidoyl-L-glutamate-binding residues include asparagine 315 and glycine 317. 4-imidazolone-5-propanoate is bound at residue threonine 318.

Belongs to the metallo-dependent hydrolases superfamily. HutI family. The cofactor is Zn(2+). Requires Fe(3+) as cofactor.

It localises to the cytoplasm. It catalyses the reaction 4-imidazolone-5-propanoate + H2O = N-formimidoyl-L-glutamate. It functions in the pathway amino-acid degradation; L-histidine degradation into L-glutamate; N-formimidoyl-L-glutamate from L-histidine: step 3/3. Catalyzes the hydrolytic cleavage of the carbon-nitrogen bond in imidazolone-5-propanoate to yield N-formimidoyl-L-glutamate. It is the third step in the universal histidine degradation pathway. The polypeptide is Imidazolonepropionase (Burkholderia multivorans (strain ATCC 17616 / 249)).